The primary structure comprises 759 residues: Polyribonucleotide nucleotidyltransferase (759 aa).

Residues D522 and D528 each contribute to the Mg(2+) site. The KH domain occupies 588–647; it reads PRITTIKVPVDKIGEVIGPKGKMINSITEETGASISIEDDGTVFVGASNGEAAQAAIDKI. The S1 motif domain maps to 659–728; it reads GERFLGTVVK…NRGKISLVLV (70 aa). Positions 734-759 are disordered; the sequence is AEASDNGSATPSDKAPATADATTAGN. Residues 741–759 are compositionally biased toward low complexity; sequence SATPSDKAPATADATTAGN.

Belongs to the polyribonucleotide nucleotidyltransferase family. It depends on Mg(2+) as a cofactor.

It localises to the cytoplasm. The enzyme catalyses RNA(n+1) + phosphate = RNA(n) + a ribonucleoside 5'-diphosphate. In terms of biological role, involved in mRNA degradation. Catalyzes the phosphorolysis of single-stranded polyribonucleotides processively in the 3'- to 5'-direction. This chain is Polyribonucleotide nucleotidyltransferase, found in Mycobacterium sp. (strain JLS).